Reading from the N-terminus, the 563-residue chain is Light-independent protochlorophyllide reductase subunit B (563 aa).

[4Fe-4S] cluster is bound at residue Asp-36. Catalysis depends on Asp-293, which acts as the Proton donor. Gly-437–Met-438 lines the substrate pocket. The disordered stretch occupies residues Glu-459 to Gly-478.

It belongs to the ChlB/BchB/BchZ family. In terms of assembly, protochlorophyllide reductase is composed of three subunits; BchL, BchN and BchB. Forms a heterotetramer of two BchB and two BchN subunits. It depends on [4Fe-4S] cluster as a cofactor.

It catalyses the reaction chlorophyllide a + oxidized 2[4Fe-4S]-[ferredoxin] + 2 ADP + 2 phosphate = protochlorophyllide a + reduced 2[4Fe-4S]-[ferredoxin] + 2 ATP + 2 H2O. Its pathway is porphyrin-containing compound metabolism; bacteriochlorophyll biosynthesis (light-independent). In terms of biological role, component of the dark-operative protochlorophyllide reductase (DPOR) that uses Mg-ATP and reduced ferredoxin to reduce ring D of protochlorophyllide (Pchlide) to form chlorophyllide a (Chlide). This reaction is light-independent. The NB-protein (BchN-BchB) is the catalytic component of the complex. The polypeptide is Light-independent protochlorophyllide reductase subunit B (Roseiflexus castenholzii (strain DSM 13941 / HLO8)).